The sequence spans 658 residues: Trimethylamine N-oxide transport system permease protein TmoV (658 aa).

15 consecutive transmembrane segments (helical) span residues 20 to 40, 103 to 123, 127 to 147, 153 to 173, 185 to 205, 212 to 232, 273 to 293, 300 to 320, 349 to 369, 420 to 440, 447 to 467, 469 to 489, 517 to 537, 585 to 605, and 627 to 647; these read LGLA…AGLL, IGPI…YYLG, MALL…WDIA, VLVV…ISAW, VLAV…VIFF, GAVA…TLGL, VIML…PGLG, MGSF…LLAV, FLLM…VVPI, FMLS…ALLV, VLAA…RSVI, LYSV…IGVV, IPAI…ILIF, AVGF…AAFI, and FVLG…IMKW. The region spanning 147–326 is the ABC transmembrane type-1 1 domain; it reads AMQTMSVLVV…LLAVTLDRMS (180 aa). The 180-residue stretch at 465 to 644 folds into the ABC transmembrane type-1 2 domain; that stretch reads SVITLYSVLA…LMALTFDMVI (180 aa).

Belongs to the binding-protein-dependent transport system permease family. The complex is probably composed of two ATP-binding proteins (TmoW), two transmembrane proteins (TmoV) and a solute-binding protein (TmoX).

It is found in the cell inner membrane. In terms of biological role, part of the ABC transporter complex TmoXWV involved in trimethylamine N-oxide (TMAO) import. Responsible for the translocation of the substrate across the membrane. Is specific for TMAO and essential for TMAO metabolism. This Ruegeria pomeroyi (strain ATCC 700808 / DSM 15171 / DSS-3) (Silicibacter pomeroyi) protein is Trimethylamine N-oxide transport system permease protein TmoV.